The sequence spans 428 residues: 4-hydroxy-3-methylbut-2-en-1-yl diphosphate synthase (flavodoxin) (428 aa).

Residues cysteine 300, cysteine 303, cysteine 346, and glutamate 353 each coordinate [4Fe-4S] cluster.

It belongs to the IspG family. The cofactor is [4Fe-4S] cluster.

The enzyme catalyses (2E)-4-hydroxy-3-methylbut-2-enyl diphosphate + oxidized [flavodoxin] + H2O + 2 H(+) = 2-C-methyl-D-erythritol 2,4-cyclic diphosphate + reduced [flavodoxin]. It participates in isoprenoid biosynthesis; isopentenyl diphosphate biosynthesis via DXP pathway; isopentenyl diphosphate from 1-deoxy-D-xylulose 5-phosphate: step 5/6. Converts 2C-methyl-D-erythritol 2,4-cyclodiphosphate (ME-2,4cPP) into 1-hydroxy-2-methyl-2-(E)-butenyl 4-diphosphate. The polypeptide is 4-hydroxy-3-methylbut-2-en-1-yl diphosphate synthase (flavodoxin) (Methylobacillus flagellatus (strain ATCC 51484 / DSM 6875 / VKM B-1610 / KT)).